The primary structure comprises 716 residues: Fatty acid oxidation complex subunit alpha (716 aa).

An enoyl-CoA hydratase/isomerase region spans residues 1–189 (MIYQSPTIQV…KVGAVDAVVA (189 aa)). Position 296 (D296) interacts with substrate. The interval 311–716 (KEVNNAAVLG…AANNGSYYQA (406 aa)) is 3-hydroxyacyl-CoA dehydrogenase. NAD(+)-binding positions include M324, D343, 400–402 (VVE), K407, and S429. The active-site For 3-hydroxyacyl-CoA dehydrogenase activity is H450. NAD(+) is bound at residue N453. N500 and Y660 together coordinate substrate.

The protein in the N-terminal section; belongs to the enoyl-CoA hydratase/isomerase family. It in the C-terminal section; belongs to the 3-hydroxyacyl-CoA dehydrogenase family. In terms of assembly, heterotetramer of two alpha chains (FadB) and two beta chains (FadA).

It carries out the reaction a (3S)-3-hydroxyacyl-CoA + NAD(+) = a 3-oxoacyl-CoA + NADH + H(+). The catalysed reaction is a (3S)-3-hydroxyacyl-CoA = a (2E)-enoyl-CoA + H2O. The enzyme catalyses a 4-saturated-(3S)-3-hydroxyacyl-CoA = a (3E)-enoyl-CoA + H2O. It catalyses the reaction (3S)-3-hydroxybutanoyl-CoA = (3R)-3-hydroxybutanoyl-CoA. It carries out the reaction a (3Z)-enoyl-CoA = a 4-saturated (2E)-enoyl-CoA. The catalysed reaction is a (3E)-enoyl-CoA = a 4-saturated (2E)-enoyl-CoA. Its pathway is lipid metabolism; fatty acid beta-oxidation. Its function is as follows. Involved in the aerobic and anaerobic degradation of long-chain fatty acids via beta-oxidation cycle. Catalyzes the formation of 3-oxoacyl-CoA from enoyl-CoA via L-3-hydroxyacyl-CoA. It can also use D-3-hydroxyacyl-CoA and cis-3-enoyl-CoA as substrate. This Shewanella baltica (strain OS195) protein is Fatty acid oxidation complex subunit alpha.